Reading from the N-terminus, the 119-residue chain is Protein TusC (119 aa).

Belongs to the DsrF/TusC family. Heterohexamer, formed by a dimer of trimers. The hexameric TusBCD complex contains 2 copies each of TusB, TusC and TusD. The TusBCD complex interacts with TusE.

It localises to the cytoplasm. Part of a sulfur-relay system required for 2-thiolation of 5-methylaminomethyl-2-thiouridine (mnm(5)s(2)U) at tRNA wobble positions. The chain is Protein TusC from Photorhabdus laumondii subsp. laumondii (strain DSM 15139 / CIP 105565 / TT01) (Photorhabdus luminescens subsp. laumondii).